A 195-amino-acid polypeptide reads, in one-letter code: Large ribosomal subunit protein uL18 (195 aa).

Belongs to the universal ribosomal protein uL18 family. Part of the 50S ribosomal subunit. Contacts the 5S and 23S rRNAs.

This is one of the proteins that bind and probably mediate the attachment of the 5S RNA into the large ribosomal subunit, where it forms part of the central protuberance. The chain is Large ribosomal subunit protein uL18 from Metallosphaera sedula (strain ATCC 51363 / DSM 5348 / JCM 9185 / NBRC 15509 / TH2).